A 353-amino-acid chain; its full sequence is Probable G-protein coupled receptor 139 (353 aa).

The Extracellular segment spans residues 1-29; the sequence is MEHTHAHLAANSSLSWWSPGSACGLGFVP. A glycan (N-linked (GlcNAc...) asparagine) is linked at asparagine 11. Residues 30–50 traverse the membrane as a helical segment; that stretch reads VVYYSLLLCLGLPANILTVII. Over 51-65 the chain is Cytoplasmic; the sequence is LSQLVARRQKSSYNY. The chain crosses the membrane as a helical span at residues 66–86; it reads LLALAAADILVLFFIVFVDFL. Residues 87–102 lie on the Extracellular side of the membrane; it reads LEDFILNMQMPQVPDK. A helical transmembrane segment spans residues 103-123; the sequence is IIEVLEFSSIHTSIWITVPLT. Topologically, residues 124–148 are cytoplasmic; the sequence is IDRYIAVCHPLKYHTVSYPARTRKV. The helical transmembrane segment at 149 to 169 threads the bilayer; that stretch reads IVSVYITCFLTSIPYYWWPNI. Residues 170–181 lie on the Extracellular side of the membrane; sequence WTEDYISTSVHH. The helical transmembrane segment at 182 to 202 threads the bilayer; it reads VLIWIHCFTVYLVPCSIFFIL. The Cytoplasmic portion of the chain corresponds to 203–228; it reads NSIIVYKLRRKSNFRLRGYSTGKTTA. The helical transmembrane segment at 229–249 threads the bilayer; sequence ILFTITSIFATLWAPRIIMIL. The Extracellular segment spans residues 250 to 268; sequence YHLYGAPIQNRWLVHIMSD. A helical transmembrane segment spans residues 269–289; sequence IANMLALLNTAINFFLYCFIS. The Cytoplasmic portion of the chain corresponds to 290 to 353; sequence KRFRTMAAAT…KNGKPIKVSP (64 aa).

Belongs to the G-protein coupled receptor 1 family. In terms of tissue distribution, expressed almost exclusively in the brain. Detected at very low levels in the peripheral tissues.

The protein localises to the cell membrane. Its function is as follows. Orphan receptor. Seems to act through a G(q/11)-mediated pathway. The polypeptide is Probable G-protein coupled receptor 139 (GPR139) (Homo sapiens (Human)).